The sequence spans 321 residues: Annexin D3 (321 aa).

Ala2 is subject to N-acetylalanine. Annexin repeat units lie at residues 11–82, 83–159, 171–243, and 247–318; these read PSPA…SWTY, DPAE…TLAS, EVAT…VAIF, and TPEK…TLLG. Residues Gly26, Gly28, and Glu68 each contribute to the Ca(2+) site. The residue at position 117 (Thr117) is a Phosphothreonine. Ile260 and Gly264 together coordinate Ca(2+). At Tyr289 the chain carries Phosphotyrosine. Asp304 lines the Ca(2+) pocket.

This sequence belongs to the annexin (TC 1.A.31.1) family. As to expression, expressed mainly in roots and flowers. Lower in stems and leaves.

The sequence is that of Annexin D3 (ANN3) from Arabidopsis thaliana (Mouse-ear cress).